Reading from the N-terminus, the 265-residue chain is NAD-capped RNA hydrolase NudC (265 aa).

Arginine 76 is a binding site for substrate. Zn(2+)-binding residues include cysteine 106, cysteine 109, cysteine 124, and cysteine 127. Tyrosine 132 serves as a coordination point for substrate. Residues 133 to 256 (PRISPAMMVL…SIAHRLIRHA (124 aa)) form the Nudix hydrolase domain. Alanine 166, glutamate 182, and glutamate 186 together coordinate a divalent metal cation. The short motif at 167–188 (GFVEPGETLEECVHRETWEEVG) is the Nudix box element. 200-207 (QSWPFPHS) lines the substrate pocket. Residue glutamate 227 coordinates a divalent metal cation. Position 249 (alanine 249) interacts with substrate.

Belongs to the Nudix hydrolase family. NudC subfamily. As to quaternary structure, homodimer. Mg(2+) serves as cofactor. Requires Mn(2+) as cofactor. Zn(2+) is required as a cofactor.

The catalysed reaction is a 5'-end NAD(+)-phospho-ribonucleoside in mRNA + H2O = a 5'-end phospho-adenosine-phospho-ribonucleoside in mRNA + beta-nicotinamide D-ribonucleotide + 2 H(+). The enzyme catalyses NAD(+) + H2O = beta-nicotinamide D-ribonucleotide + AMP + 2 H(+). It catalyses the reaction NADH + H2O = reduced beta-nicotinamide D-ribonucleotide + AMP + 2 H(+). Its function is as follows. mRNA decapping enzyme that specifically removes the nicotinamide adenine dinucleotide (NAD) cap from a subset of mRNAs by hydrolyzing the diphosphate linkage to produce nicotinamide mononucleotide (NMN) and 5' monophosphate mRNA. The NAD-cap is present at the 5'-end of some mRNAs and stabilizes RNA against 5'-processing. Has preference for mRNAs with a 5'-end purine. Catalyzes the hydrolysis of a broad range of dinucleotide pyrophosphates. In Chromobacterium violaceum (strain ATCC 12472 / DSM 30191 / JCM 1249 / CCUG 213 / NBRC 12614 / NCIMB 9131 / NCTC 9757 / MK), this protein is NAD-capped RNA hydrolase NudC.